A 179-amino-acid chain; its full sequence is ATP synthase subunit b (179 aa).

The helical transmembrane segment at 23-43 (IVVGLVAFGLLAFVLMKFVFP) threads the bilayer.

Belongs to the ATPase B chain family. F-type ATPases have 2 components, F(1) - the catalytic core - and F(0) - the membrane proton channel. F(1) has five subunits: alpha(3), beta(3), gamma(1), delta(1), epsilon(1). F(0) has three main subunits: a(1), b(2) and c(10-14). The alpha and beta chains form an alternating ring which encloses part of the gamma chain. F(1) is attached to F(0) by a central stalk formed by the gamma and epsilon chains, while a peripheral stalk is formed by the delta and b chains.

The protein localises to the cell membrane. F(1)F(0) ATP synthase produces ATP from ADP in the presence of a proton or sodium gradient. F-type ATPases consist of two structural domains, F(1) containing the extramembraneous catalytic core and F(0) containing the membrane proton channel, linked together by a central stalk and a peripheral stalk. During catalysis, ATP synthesis in the catalytic domain of F(1) is coupled via a rotary mechanism of the central stalk subunits to proton translocation. In terms of biological role, component of the F(0) channel, it forms part of the peripheral stalk, linking F(1) to F(0). In Salinispora arenicola (strain CNS-205), this protein is ATP synthase subunit b.